The chain runs to 548 residues: MAAKDVKFGNDARVKMLRGVNVLADAVKVTLGPKGRNVVLDKSFGAPTITKDGVSVAREIELEDKFENMGAQMVKEVASKANDAAGDGTTTATVLAQAIVNEGLKAVAAGMNPMDLKRGIDKAVVAAVEELKALSVPCSDSKAIAQVGTISANSDETVGKLIAEAMDKVGKEGVITVEDGTGLEDELDVVEGMQFDRGYLSPYFINKPDTGAVELESPFILLADKKISNIREMLPVLEAVAKAGKPLVIIAEDVEGEALATLVVNTMRGIVKVAAVKAPGFGDRRKAMLQDIATLTGGTVISEEIGMELEKATLEDLGQAKRVVINKDTTTIIDGVGEEAAIQGRVAQIRKQIEEATSDYDREKLQERVAKLAGGVAVIKVGAATEVEMKEKKARVDDALHATRAAVEEGVVAGGGVALVRVAAKIAGLTGQNEDQNVGIKVALRAMEAPLRQIVSNAGEEPSVVANNVKAGDGNYGYNAATEEYGNMIDFGILDPTKVTRSALQYAASVAGLMITTECMVTDLPKGDAPDLGAAGGMGGMGGMGGMM.

Residues Thr30–Pro33, Lys51, Asp87–Thr91, Gly415, Asn479–Ala481, and Asp495 contribute to the ATP site.

This sequence belongs to the chaperonin (HSP60) family. As to quaternary structure, forms a cylinder of 14 subunits composed of two heptameric rings stacked back-to-back. Interacts with the co-chaperonin GroES.

The protein localises to the cytoplasm. The catalysed reaction is ATP + H2O + a folded polypeptide = ADP + phosphate + an unfolded polypeptide.. Its function is as follows. Together with its co-chaperonin GroES, plays an essential role in assisting protein folding. The GroEL-GroES system forms a nano-cage that allows encapsulation of the non-native substrate proteins and provides a physical environment optimized to promote and accelerate protein folding. The chain is Chaperonin GroEL from Klebsiella aerogenes (strain ATCC 13048 / DSM 30053 / CCUG 1429 / JCM 1235 / KCTC 2190 / NBRC 13534 / NCIMB 10102 / NCTC 10006 / CDC 819-56) (Enterobacter aerogenes).